We begin with the raw amino-acid sequence, 310 residues long: Olfactory receptor 4C16 (310 aa).

The Extracellular segment spans residues 1–23 (MQLNNNVTEFILLGLTQDPFWKK). Residue Asn6 is glycosylated (N-linked (GlcNAc...) asparagine). Residues 24 to 47 (IVFVIFLRLYLGTLLGNLLIIISV) traverse the membrane as a helical segment. Topologically, residues 48–55 (KTSQALKN) are cytoplasmic. Residues 56–77 (PMFFFLFYLSLSDTCLSTSITP) form a helical membrane-spanning segment. The Extracellular portion of the chain corresponds to 78–98 (RMIVDALLKKTTISFSECMIQ). Cys95 and Cys187 are joined by a disulfide. A helical membrane pass occupies residues 99–118 (VFSSHVFGCLEIFILILTAV). Residues 119-137 (DRYVDICKPLHYMTIISQW) lie on the Cytoplasmic side of the membrane. Residues 138–156 (VCGVLMAVAWVGSCVHSLV) traverse the membrane as a helical segment. Topologically, residues 157–193 (QIFLALSLPFCGPNVINHCFCDLQPLLKQACSETYVV) are extracellular. Residues 194–217 (NLLLVSNSGAICAVSYVMLIFSYV) form a helical membrane-spanning segment. Over 218-233 (IFLHSLRNHSAEVIKK) the chain is Cytoplasmic. Residues 234–256 (ALSTCVSHIIVVILFFGPCIFMY) traverse the membrane as a helical segment. At 257-267 (TCLATVFPMDK) the chain is on the extracellular side. Residues 268–287 (MIAVFYTVGTSFLNPVIYTL) form a helical membrane-spanning segment. At 288 to 310 (KNTEVKSAMRKLWSKKLITDDKR) the chain is on the cytoplasmic side.

It belongs to the G-protein coupled receptor 1 family.

It is found in the cell membrane. Odorant receptor. The polypeptide is Olfactory receptor 4C16 (OR4C16) (Homo sapiens (Human)).